A 227-amino-acid chain; its full sequence is 2-C-methyl-D-erythritol 4-phosphate cytidylyltransferase (227 aa).

The protein belongs to the IspD/TarI cytidylyltransferase family. IspD subfamily.

It catalyses the reaction 2-C-methyl-D-erythritol 4-phosphate + CTP + H(+) = 4-CDP-2-C-methyl-D-erythritol + diphosphate. Its pathway is isoprenoid biosynthesis; isopentenyl diphosphate biosynthesis via DXP pathway; isopentenyl diphosphate from 1-deoxy-D-xylulose 5-phosphate: step 2/6. Functionally, catalyzes the formation of 4-diphosphocytidyl-2-C-methyl-D-erythritol from CTP and 2-C-methyl-D-erythritol 4-phosphate (MEP). The sequence is that of 2-C-methyl-D-erythritol 4-phosphate cytidylyltransferase from Thermosipho melanesiensis (strain DSM 12029 / CIP 104789 / BI429).